Here is a 303-residue protein sequence, read N- to C-terminus: Glutamyl-Q tRNA(Asp) synthetase (303 aa).

L-glutamate-binding positions include 9 to 13 (RFAPS) and glutamate 45. Residues 12 to 22 (PSPSGSLHFGS) carry the 'HIGH' region motif. 4 residues coordinate Zn(2+): cysteine 101, cysteine 103, tyrosine 115, and cysteine 119. L-glutamate is bound by residues tyrosine 172 and arginine 190. The short motif at 228–232 (KLSKQ) is the 'KMSKS' region element. Lysine 231 contacts ATP.

It belongs to the class-I aminoacyl-tRNA synthetase family. GluQ subfamily. Zn(2+) is required as a cofactor.

In terms of biological role, catalyzes the tRNA-independent activation of glutamate in presence of ATP and the subsequent transfer of glutamate onto a tRNA(Asp). Glutamate is transferred on the 2-amino-5-(4,5-dihydroxy-2-cyclopenten-1-yl) moiety of the queuosine in the wobble position of the QUC anticodon. The polypeptide is Glutamyl-Q tRNA(Asp) synthetase (Serratia proteamaculans (strain 568)).